Here is a 130-residue protein sequence, read N- to C-terminus: MNSLSLPHRYPFLFIDGVTDSEPGKHAAAYKLISENDWFITDTQTEMPFSLVIEALAQTAAFTGITDENSLGLLSSVKKAEKLGEAVPGDRLDLTFEVTRNRRGFVFGHAKASVGEQPVAEAEIGIYIEK.

The protein belongs to the thioester dehydratase family. FabZ subfamily.

This is an uncharacterized protein from Bacillus subtilis (strain 168).